The following is a 65-amino-acid chain: Large ribosomal subunit protein bL35 (65 aa).

It belongs to the bacterial ribosomal protein bL35 family.

The chain is Large ribosomal subunit protein bL35 from Geobacter sp. (strain M21).